Here is a 414-residue protein sequence, read N- to C-terminus: Tar DNA-binding protein homolog 1 (414 aa).

Basic and acidic residues-rich tracts occupy residues 1–44 (MADE…KTTD) and 153–167 (DDGR…RAVE). Disordered regions lie at residues 1–58 (MADE…GDEP) and 132–167 (SSAD…RAVE). RRM domains lie at 173–259 (VDLI…QGRP) and 262–341 (SRIF…IAQP). The disordered stretch occupies residues 343–414 (EENNQSVGPD…APGDSRGPGW (72 aa)). The span at 361–373 (NRRERDRPDRRPI) shows a compositional bias: basic and acidic residues.

In terms of assembly, interacts with chromobox protein homolog hpl-2; interaction may maintain localization of hpl-2 to gene bodies. As to expression, widely expressed in a range of tissues including body wall muscles, pharynx and neurons of the midbody in adults and larvae.

The protein localises to the nucleus. It localises to the cytoplasm. Its function is as follows. RNA-binding protein which regulates transcription, splicing and RNA-editing. Limits the accumulation of double-stranded RNA by maintaining the abundance of the mature RNA transcripts that are formed from double-stranded precursor RNAs. Stress response protein that acts downstream of daf-16 in the insulin/IGF pathway to regulate longevity and the cellular stress response to osmotic, oxidative, proteotoxic and endoplasmic reticulum stress. Involved in the regulation of physiological processes including aging, fertility, growth and locomotion. Plays a role in maintaining localization of chromobox protein homolog hpl-2 to gene bodies, perhaps acting via binding to nascent RNA transcripts. The polypeptide is Tar DNA-binding protein homolog 1 (Caenorhabditis elegans).